Here is a 195-residue protein sequence, read N- to C-terminus: MSIVPIVIEQTGRTERVYDIYSRLLKDRIIFIGTEINDHVANVVIAQLLFLQTEDPEKDIHIYINSPGGMVSSGLAIYDTMQYVKPDIATYCIGQASSMACVLLAAGTKGKRFALPHSRVMIHQPIGGFYGQATDVEIHAKEILKMKDLLNNILAKHTGQPIEKIQKDTERDFFMSAEEAKLYGIVDEVISSIKK.

The active-site Nucleophile is the Ser98. Residue His123 is part of the active site.

This sequence belongs to the peptidase S14 family. Fourteen ClpP subunits assemble into 2 heptameric rings which stack back to back to give a disk-like structure with a central cavity, resembling the structure of eukaryotic proteasomes.

The protein resides in the cytoplasm. It catalyses the reaction Hydrolysis of proteins to small peptides in the presence of ATP and magnesium. alpha-casein is the usual test substrate. In the absence of ATP, only oligopeptides shorter than five residues are hydrolyzed (such as succinyl-Leu-Tyr-|-NHMec, and Leu-Tyr-Leu-|-Tyr-Trp, in which cleavage of the -Tyr-|-Leu- and -Tyr-|-Trp bonds also occurs).. Functionally, cleaves peptides in various proteins in a process that requires ATP hydrolysis. Has a chymotrypsin-like activity. Plays a major role in the degradation of misfolded proteins. This Thermodesulfovibrio yellowstonii (strain ATCC 51303 / DSM 11347 / YP87) protein is ATP-dependent Clp protease proteolytic subunit.